The primary structure comprises 344 residues: Dihydroorotate dehydrogenase (quinone) (344 aa).

Residues 65-69 (AGLDK) and threonine 89 each bind FMN. Lysine 69 contacts substrate. 114–118 (NRMGF) is a substrate binding site. FMN-binding residues include asparagine 145 and asparagine 178. Substrate is bound at residue asparagine 178. Serine 181 (nucleophile) is an active-site residue. Asparagine 183 contacts substrate. Residues lysine 223 and threonine 251 each coordinate FMN. 252 to 253 (NT) lines the substrate pocket. FMN is bound by residues glycine 274, glycine 303, and 324 to 325 (YS).

The protein belongs to the dihydroorotate dehydrogenase family. Type 2 subfamily. Monomer. FMN is required as a cofactor.

It localises to the cell membrane. It carries out the reaction (S)-dihydroorotate + a quinone = orotate + a quinol. Its pathway is pyrimidine metabolism; UMP biosynthesis via de novo pathway; orotate from (S)-dihydroorotate (quinone route): step 1/1. Its function is as follows. Catalyzes the conversion of dihydroorotate to orotate with quinone as electron acceptor. This chain is Dihydroorotate dehydrogenase (quinone), found in Cupriavidus pinatubonensis (strain JMP 134 / LMG 1197) (Cupriavidus necator (strain JMP 134)).